A 1008-amino-acid polypeptide reads, in one-letter code: SKI family transcriptional corepressor 2 (1008 aa).

Disordered regions lie at residues 280-315 (HLLG…DDDD) and 514-927 (EPGG…KKDV). Pro residues-rich tracts occupy residues 284-294 (APPPPPPPPPL) and 525-534 (APPPGQPPPV). Composition is skewed to low complexity over residues 535-544 (VANGPGSGPP) and 578-595 (GVTS…SVGT). The segment covering 626 to 635 (GGKDDAESLA) has biased composition (basic and acidic residues). Positions 649 to 666 (PAHHHHHHHHPHHHHHHP) are enriched in basic residues. The segment covering 691–703 (APPPPPPPPPLAP) has biased composition (pro residues). Acidic residues-rich tracts occupy residues 724 to 739 (DSSE…QEVD) and 748 to 766 (GEEE…EDEE). Residues 787 to 797 (LSEKGSGRDRT) are compositionally biased toward basic and acidic residues. A compositionally biased stretch (low complexity) spans 842-855 (SSSGGSRPGSPVHH). Basic and acidic residues-rich tracts occupy residues 856-872 (PSLE…KPKE), 880-890 (TKDDNFSDKNK), and 905-915 (FWRERSGEHTQ).

It belongs to the SKI family. In terms of assembly, interacts with SMAD2 and SMAD3. In terms of tissue distribution, expression is restricted to adult and embryonic central nervous system. Expressed at high levels in the developing cerebellum, ventral metencephalon and myelencephalon at 12.5 dpc (at protein level). In the adult cerebellum, expressed specifically in Purkinje cells.

The protein resides in the nucleus. The protein localises to the cytoplasm. Acts as a TGF-beta antagonist in the nervous system. Exhibits transcriptional repressor activity. The polypeptide is SKI family transcriptional corepressor 2 (Mus musculus (Mouse)).